A 304-amino-acid polypeptide reads, in one-letter code: D-tagatose-1-phosphate kinase (304 aa).

Asp250 (proton acceptor) is an active-site residue.

The protein belongs to the carbohydrate kinase PfkB family. Mg(2+) serves as cofactor.

The enzyme catalyses alpha-D-tagatopyranose 1-phosphate + ATP = D-tagatofuranose 1,6-bisphosphate + ADP + H(+). Its pathway is carbohydrate degradation. Activity is inhibited by tagatose-6-phosphate and fructose-6-phosphate. Its function is as follows. Kinase involved in a D-tagatose catabolic pathway. Catalyzes the phosphorylation of D-tagatose-1-phosphate (Tag-1P) to D-tagatose-1,6-bisphosphate. Can also use D-fructose-1-phosphate, with 40-fold lower catalytic efficiency, but not tagatose-6-phosphate or fructose-6-phosphate. The substrate, which occurs in a pyranose form in solution, may undergo a change to the furanose conformation after binding to the enzyme, in order to permit phosphorylation at C-6. The protein is D-tagatose-1-phosphate kinase of Bacillus licheniformis (strain ATCC 14580 / DSM 13 / JCM 2505 / CCUG 7422 / NBRC 12200 / NCIMB 9375 / NCTC 10341 / NRRL NRS-1264 / Gibson 46).